A 1012-amino-acid polypeptide reads, in one-letter code: DNA polymerase catalytic subunit (1012 aa).

Belongs to the DNA polymerase type-B family.

The protein resides in the host nucleus. It carries out the reaction DNA(n) + a 2'-deoxyribonucleoside 5'-triphosphate = DNA(n+1) + diphosphate. This Human herpesvirus 6A (strain Uganda-1102) (HHV-6 variant A) protein is DNA polymerase catalytic subunit (U38).